The chain runs to 285 residues: Bifunctional protein FolD (285 aa).

Residues 166–168 (GAS) and I232 contribute to the NADP(+) site.

The protein belongs to the tetrahydrofolate dehydrogenase/cyclohydrolase family. As to quaternary structure, homodimer.

It catalyses the reaction (6R)-5,10-methylene-5,6,7,8-tetrahydrofolate + NADP(+) = (6R)-5,10-methenyltetrahydrofolate + NADPH. The enzyme catalyses (6R)-5,10-methenyltetrahydrofolate + H2O = (6R)-10-formyltetrahydrofolate + H(+). Its pathway is one-carbon metabolism; tetrahydrofolate interconversion. Catalyzes the oxidation of 5,10-methylenetetrahydrofolate to 5,10-methenyltetrahydrofolate and then the hydrolysis of 5,10-methenyltetrahydrofolate to 10-formyltetrahydrofolate. This Vibrio atlanticus (strain LGP32) (Vibrio splendidus (strain Mel32)) protein is Bifunctional protein FolD.